The following is a 350-amino-acid chain: Nicotinate-nucleotide--dimethylbenzimidazole phosphoribosyltransferase (350 aa).

Residue Glu-316 is the Proton acceptor of the active site.

It belongs to the CobT family.

It carries out the reaction 5,6-dimethylbenzimidazole + nicotinate beta-D-ribonucleotide = alpha-ribazole 5'-phosphate + nicotinate + H(+). It participates in nucleoside biosynthesis; alpha-ribazole biosynthesis; alpha-ribazole from 5,6-dimethylbenzimidazole: step 1/2. In terms of biological role, catalyzes the synthesis of alpha-ribazole-5'-phosphate from nicotinate mononucleotide (NAMN) and 5,6-dimethylbenzimidazole (DMB). This is Nicotinate-nucleotide--dimethylbenzimidazole phosphoribosyltransferase from Pseudomonas savastanoi pv. phaseolicola (strain 1448A / Race 6) (Pseudomonas syringae pv. phaseolicola (strain 1448A / Race 6)).